A 651-amino-acid chain; its full sequence is BTB/POZ domain-containing protein At3g44820 (651 aa).

The BTB domain maps to 25-96 (SDITVVVDDV…CYGARVDITS (72 aa)). The NPH3 domain occupies 211 to 509 (DWWYEDISYL…LQVLFFEQMH (299 aa)). The disordered stretch occupies residues 611 to 651 (DAKNDTVQNSVSSTPRSATADHTLPRSSRHSKHRKSFSFFG). Residues 615 to 627 (DTVQNSVSSTPRS) show a composition bias toward polar residues. Positions 637 to 651 (SSRHSKHRKSFSFFG) are enriched in basic residues.

The protein belongs to the NPH3 family.

Its pathway is protein modification; protein ubiquitination. In terms of biological role, may act as a substrate-specific adapter of an E3 ubiquitin-protein ligase complex (CUL3-RBX1-BTB) which mediates the ubiquitination and subsequent proteasomal degradation of target proteins. The polypeptide is BTB/POZ domain-containing protein At3g44820 (Arabidopsis thaliana (Mouse-ear cress)).